Reading from the N-terminus, the 419-residue chain is 3-isopropylmalate dehydratase large subunit (419 aa).

C300, C360, and C363 together coordinate [4Fe-4S] cluster.

The protein belongs to the aconitase/IPM isomerase family. LeuC type 2 subfamily. In terms of assembly, heterodimer of LeuC and LeuD. [4Fe-4S] cluster serves as cofactor.

The enzyme catalyses (2R,3S)-3-isopropylmalate = (2S)-2-isopropylmalate. It participates in amino-acid biosynthesis; L-leucine biosynthesis; L-leucine from 3-methyl-2-oxobutanoate: step 2/4. Functionally, catalyzes the isomerization between 2-isopropylmalate and 3-isopropylmalate, via the formation of 2-isopropylmaleate. The polypeptide is 3-isopropylmalate dehydratase large subunit (Nitratidesulfovibrio vulgaris (strain DP4) (Desulfovibrio vulgaris)).